Reading from the N-terminus, the 305-residue chain is Lysosomal thioesterase PPT2 (305 aa).

Residues M1–P32 form the signal peptide. Cystine bridges form between C112/C120 and C168/C179. S114 serves as the catalytic Nucleophile. An N-linked (GlcNAc...) asparagine glycan is attached at N193. Active-site residues include D231 and H286. A disulfide bridge links C279 with C299.

Belongs to the palmitoyl-protein thioesterase family.

It localises to the lysosome. It carries out the reaction hexadecanoyl-CoA + H2O = hexadecanoate + CoA + H(+). The catalysed reaction is S-hexadecanoyl-N-acetylcysteamine + H2O = N-acetylcysteamine + hexadecanoate + H(+). Catalyzes the cleavage of thioester bonds from S-palmitoyl-CoA or S-palmitoyl-N-acetylcysteamine (unbranched structures) but does not have activity against palmitoylcysteine or palmitoylated proteins, branched structures or bulky head groups. Conversely, hydrolyzes both long and short chain fatty acyl-CoA substrate. This chain is Lysosomal thioesterase PPT2 (PPT2), found in Bos taurus (Bovine).